We begin with the raw amino-acid sequence, 146 residues long: Chorion class A protein Ld3/Ld29 (146 aa).

A signal peptide spans 1–21 (MNTFALLSVFIQACLVQSVFS).

Belongs to the chorion protein family.

In terms of biological role, this protein is one of many from the eggshell of the gypsy moth. The polypeptide is Chorion class A protein Ld3/Ld29 (Lymantria dispar (Gypsy moth)).